A 61-amino-acid polypeptide reads, in one-letter code: Photosystem II reaction center protein K (61 aa).

The propeptide occupies 1 to 24; sequence MINIFSFICIYLHSALYSSSFFFG. A helical transmembrane segment spans residues 40-60; sequence MPVIPLFFFLLAFVWQAAVSF.

The protein belongs to the PsbK family. PSII is composed of 1 copy each of membrane proteins PsbA, PsbB, PsbC, PsbD, PsbE, PsbF, PsbH, PsbI, PsbJ, PsbK, PsbL, PsbM, PsbT, PsbX, PsbY, PsbZ, Psb30/Ycf12, at least 3 peripheral proteins of the oxygen-evolving complex and a large number of cofactors. It forms dimeric complexes.

Its subcellular location is the plastid. The protein localises to the chloroplast thylakoid membrane. In terms of biological role, one of the components of the core complex of photosystem II (PSII). PSII is a light-driven water:plastoquinone oxidoreductase that uses light energy to abstract electrons from H(2)O, generating O(2) and a proton gradient subsequently used for ATP formation. It consists of a core antenna complex that captures photons, and an electron transfer chain that converts photonic excitation into a charge separation. The protein is Photosystem II reaction center protein K of Pelargonium hortorum (Common geranium).